The sequence spans 749 residues: Polyribonucleotide nucleotidyltransferase (749 aa).

Mg(2+) contacts are provided by Asp487 and Asp493. A KH domain is found at 554-613 (PSTTTIKIDKDKIRDIIGPGGKIIKEICETSGAKIDISDDGTVSVYASDRDKLKVALDKI). Residues 623 to 691 (GEIFNGTVVK…NKGKAKLTIK (69 aa)) enclose the S1 motif domain. The interval 691–749 (KNADKDKSSNNTKPKTNVNNTNKDNSEPEQRRDSSKKRAWNEDNNAETAEVITERKYFN) is disordered. Over residues 699–713 (SNNTKPKTNVNNTNK) the composition is skewed to low complexity. Positions 714 to 723 (DNSEPEQRRD) are enriched in basic and acidic residues.

It belongs to the polyribonucleotide nucleotidyltransferase family. Requires Mg(2+) as cofactor.

The protein localises to the cytoplasm. It carries out the reaction RNA(n+1) + phosphate = RNA(n) + a ribonucleoside 5'-diphosphate. Its function is as follows. Involved in mRNA degradation. Catalyzes the phosphorolysis of single-stranded polyribonucleotides processively in the 3'- to 5'-direction. The chain is Polyribonucleotide nucleotidyltransferase from Rickettsia conorii (strain ATCC VR-613 / Malish 7).